The sequence spans 283 residues: MTAQLIDGKTISAALLDRVAAGVKARTEAGKRAPALAVILVGNNPASEVYVRNKKKGCEKAGIQSLAYDLPESTSEADLLALVDELNARSDVDGILVQLPLPRHINPETVIERINPKKDVDGFHPYNMGRLAVKMPLLRPCTPRGVMIMLEHAGISVEGKHAVVIGQSNIVGRPMALELLMERATVTICHSRTRDLPEEVKRADIIVAAVGIPRFVKGDWVKPGAVVIDVGINRLEDGKLCGDVDFDAAKEHASWITPVPGGVGLMTVATLLANTLDAANLHA.

NADP(+) is bound by residues 166-168, S191, and I232; that span reads GQS.

The protein belongs to the tetrahydrofolate dehydrogenase/cyclohydrolase family. As to quaternary structure, homodimer.

It carries out the reaction (6R)-5,10-methylene-5,6,7,8-tetrahydrofolate + NADP(+) = (6R)-5,10-methenyltetrahydrofolate + NADPH. The enzyme catalyses (6R)-5,10-methenyltetrahydrofolate + H2O = (6R)-10-formyltetrahydrofolate + H(+). It functions in the pathway one-carbon metabolism; tetrahydrofolate interconversion. Its function is as follows. Catalyzes the oxidation of 5,10-methylenetetrahydrofolate to 5,10-methenyltetrahydrofolate and then the hydrolysis of 5,10-methenyltetrahydrofolate to 10-formyltetrahydrofolate. In Laribacter hongkongensis (strain HLHK9), this protein is Bifunctional protein FolD.